The primary structure comprises 662 residues: Aprataxin-like protein (662 aa).

The 105-residue stretch at 4-108 folds into the HIT domain; the sequence is SSALIKDISK…ISKDFVSTSL (105 aa). A C2H2-type zinc finger spans residues 381–403; it reads LRCNQCEFVTNMLLDLKAHLYQH. A disordered region spans residues 482 to 662; that stretch reads KNINGPSVNM…PAPPSNSKPS (181 aa). Low complexity predominate over residues 490-500; it reads NMMNQNNPNNP. Composition is skewed to polar residues over residues 501–513 and 560–569; these read FRNTPHLNRQSQK and GHQQFPNASS. The segment covering 570 to 582 has biased composition (gly residues); sequence VGGGQTGLPGQGQ. The span at 588–599 shows a compositional bias: polar residues; sequence WNSNKIFNQQNR. Residues 600–626 are compositionally biased toward low complexity; sequence QNTVQAQPQAQNQQTNQQQIQNSNKNQ. Positions 653–662 are enriched in pro residues; it reads PAPPSNSKPS.

It localises to the nucleus. DNA-binding protein involved in single-strand DNA break repair, double-strand DNA break repair and base excision repair. Resolves abortive DNA ligation intermediates formed either at base excision sites, or when DNA ligases attempt to repair non-ligatable breaks induced by reactive oxygen species. Catalyzes the release of adenylate groups covalently linked to 5'-phosphate termini, resulting in the production of 5'-phosphate termini that can be efficiently rejoined. This Drosophila melanogaster (Fruit fly) protein is Aprataxin-like protein.